The following is a 261-amino-acid chain: Ribosomal RNA small subunit methyltransferase J (261 aa).

S-adenosyl-L-methionine-binding positions include 129–130 (ER) and Asp182.

Belongs to the methyltransferase superfamily. RsmJ family.

It localises to the cytoplasm. The enzyme catalyses guanosine(1516) in 16S rRNA + S-adenosyl-L-methionine = N(2)-methylguanosine(1516) in 16S rRNA + S-adenosyl-L-homocysteine + H(+). Its function is as follows. Specifically methylates the guanosine in position 1516 of 16S rRNA. This chain is Ribosomal RNA small subunit methyltransferase J, found in Desulfotalea psychrophila (strain LSv54 / DSM 12343).